A 123-amino-acid chain; its full sequence is Small ribosomal subunit protein bS6 (123 aa).

Residues 102 to 123 form a disordered region; that stretch reads MLKQKEERAPRREAEAKEFAAE. Basic and acidic residues predominate over residues 104 to 123; it reads KQKEERAPRREAEAKEFAAE.

It belongs to the bacterial ribosomal protein bS6 family.

Functionally, binds together with bS18 to 16S ribosomal RNA. In Vibrio vulnificus (strain CMCP6), this protein is Small ribosomal subunit protein bS6.